Consider the following 208-residue polypeptide: Large ribosomal subunit protein uL4 (208 aa).

The segment at 58–77 (RGGGRKPWRQKGTGRARQGS) is disordered. A compositionally biased stretch (basic residues) spans 60–71 (GGRKPWRQKGTG).

The protein belongs to the universal ribosomal protein uL4 family. As to quaternary structure, part of the 50S ribosomal subunit.

Functionally, one of the primary rRNA binding proteins, this protein initially binds near the 5'-end of the 23S rRNA. It is important during the early stages of 50S assembly. It makes multiple contacts with different domains of the 23S rRNA in the assembled 50S subunit and ribosome. Its function is as follows. Forms part of the polypeptide exit tunnel. The protein is Large ribosomal subunit protein uL4 of Caldicellulosiruptor saccharolyticus (strain ATCC 43494 / DSM 8903 / Tp8T 6331).